A 595-amino-acid chain; its full sequence is Phosphomethylpyrimidine synthase (595 aa).

A compositionally biased stretch (basic and acidic residues) spans 97 to 120 (GRDVRPEDNGFTKDDDPRAAREVF). The segment at 97-134 (GRDVRPEDNGFTKDDDPRAAREVFPRTSSHKPLRAKKG) is disordered. Residues 124 to 133 (SSHKPLRAKK) show a composition bias toward basic residues. Residues N202, M231, Y260, H296, 316–318 (SRG), 357–360 (DGLR), and E396 contribute to the substrate site. A Zn(2+)-binding site is contributed by H400. Y423 provides a ligand contact to substrate. H464 contacts Zn(2+). Residues C544, C547, and C552 each contribute to the [4Fe-4S] cluster site.

The protein belongs to the ThiC family. [4Fe-4S] cluster serves as cofactor.

The catalysed reaction is 5-amino-1-(5-phospho-beta-D-ribosyl)imidazole + S-adenosyl-L-methionine = 4-amino-2-methyl-5-(phosphooxymethyl)pyrimidine + CO + 5'-deoxyadenosine + formate + L-methionine + 3 H(+). The protein operates within cofactor biosynthesis; thiamine diphosphate biosynthesis. Functionally, catalyzes the synthesis of the hydroxymethylpyrimidine phosphate (HMP-P) moiety of thiamine from aminoimidazole ribotide (AIR) in a radical S-adenosyl-L-methionine (SAM)-dependent reaction. In Halalkalibacterium halodurans (strain ATCC BAA-125 / DSM 18197 / FERM 7344 / JCM 9153 / C-125) (Bacillus halodurans), this protein is Phosphomethylpyrimidine synthase.